The chain runs to 717 residues: Fatty acid oxidation complex subunit alpha (717 aa).

The segment at 1-190 (MIHAGNAITV…KDGAVDAVVS (190 aa)) is enoyl-CoA hydratase/isomerase. Asp298 serves as a coordination point for substrate. Residues 313–717 (HPVNQAAVLG…MAENNKKFYG (405 aa)) are 3-hydroxyacyl-CoA dehydrogenase. NAD(+) is bound by residues Met326, Asp345, 402–404 (VTE), Lys409, and Ser431. His452 functions as the For 3-hydroxyacyl-CoA dehydrogenase activity in the catalytic mechanism. Residue Asn455 coordinates NAD(+). Asn502 is a substrate binding site.

This sequence in the N-terminal section; belongs to the enoyl-CoA hydratase/isomerase family. The protein in the C-terminal section; belongs to the 3-hydroxyacyl-CoA dehydrogenase family. Heterotetramer of two alpha chains (FadB) and two beta chains (FadA).

The catalysed reaction is a (3S)-3-hydroxyacyl-CoA + NAD(+) = a 3-oxoacyl-CoA + NADH + H(+). It catalyses the reaction a (3S)-3-hydroxyacyl-CoA = a (2E)-enoyl-CoA + H2O. The enzyme catalyses a 4-saturated-(3S)-3-hydroxyacyl-CoA = a (3E)-enoyl-CoA + H2O. It carries out the reaction (3S)-3-hydroxybutanoyl-CoA = (3R)-3-hydroxybutanoyl-CoA. The catalysed reaction is a (3Z)-enoyl-CoA = a 4-saturated (2E)-enoyl-CoA. It catalyses the reaction a (3E)-enoyl-CoA = a 4-saturated (2E)-enoyl-CoA. The protein operates within lipid metabolism; fatty acid beta-oxidation. Functionally, involved in the aerobic and anaerobic degradation of long-chain fatty acids via beta-oxidation cycle. Catalyzes the formation of 3-oxoacyl-CoA from enoyl-CoA via L-3-hydroxyacyl-CoA. It can also use D-3-hydroxyacyl-CoA and cis-3-enoyl-CoA as substrate. The sequence is that of Fatty acid oxidation complex subunit alpha from Acinetobacter baylyi (strain ATCC 33305 / BD413 / ADP1).